Here is a 290-residue protein sequence, read N- to C-terminus: Ribosomal RNA small subunit methyltransferase A (290 aa).

Positions 27, 29, 54, 75, 100, and 125 each coordinate S-adenosyl-L-methionine.

This sequence belongs to the class I-like SAM-binding methyltransferase superfamily. rRNA adenine N(6)-methyltransferase family. RsmA subfamily.

The protein resides in the cytoplasm. The catalysed reaction is adenosine(1518)/adenosine(1519) in 16S rRNA + 4 S-adenosyl-L-methionine = N(6)-dimethyladenosine(1518)/N(6)-dimethyladenosine(1519) in 16S rRNA + 4 S-adenosyl-L-homocysteine + 4 H(+). Its function is as follows. Specifically dimethylates two adjacent adenosines (A1518 and A1519) in the loop of a conserved hairpin near the 3'-end of 16S rRNA in the 30S particle. May play a critical role in biogenesis of 30S subunits. This is Ribosomal RNA small subunit methyltransferase A from Streptococcus pneumoniae (strain JJA).